The chain runs to 731 residues: 1,4-alpha-glucan branching enzyme GlgB (731 aa).

Asp-412 acts as the Nucleophile in catalysis. Glu-465 functions as the Proton donor in the catalytic mechanism.

Belongs to the glycosyl hydrolase 13 family. GlgB subfamily. Monomer.

The enzyme catalyses Transfers a segment of a (1-&gt;4)-alpha-D-glucan chain to a primary hydroxy group in a similar glucan chain.. It functions in the pathway glycan biosynthesis; glycogen biosynthesis. Catalyzes the formation of the alpha-1,6-glucosidic linkages in glycogen by scission of a 1,4-alpha-linked oligosaccharide from growing alpha-1,4-glucan chains and the subsequent attachment of the oligosaccharide to the alpha-1,6 position. The polypeptide is 1,4-alpha-glucan branching enzyme GlgB (Bordetella pertussis (strain Tohama I / ATCC BAA-589 / NCTC 13251)).